A 230-amino-acid chain; its full sequence is Ribonuclease 3 (230 aa).

The region spanning 5-125 (YSRFYNILGY…VIGAIYLDSD (121 aa)) is the RNase III domain. Glu-40 contributes to the Mg(2+) binding site. Asp-44 is a catalytic residue. 2 residues coordinate Mg(2+): Asp-111 and Glu-114. Glu-114 is an active-site residue. In terms of domain architecture, DRBM spans 153 to 223 (DSKSKLQEIL…AEKMIEMLSQ (71 aa)).

It belongs to the ribonuclease III family. Homodimer. Mg(2+) serves as cofactor.

Its subcellular location is the cytoplasm. The catalysed reaction is Endonucleolytic cleavage to 5'-phosphomonoester.. In terms of biological role, digests double-stranded RNA. Involved in the processing of primary rRNA transcript to yield the immediate precursors to the large and small rRNAs (23S and 16S). Processes some mRNAs, and tRNAs when they are encoded in the rRNA operon. Processes pre-crRNA and tracrRNA of type II CRISPR loci if present in the organism. This is Ribonuclease 3 from Francisella tularensis subsp. holarctica (strain LVS).